Here is a 232-residue protein sequence, read N- to C-terminus: Orotidine 5'-phosphate decarboxylase (232 aa).

Residues aspartate 13, lysine 35, 62–71, threonine 122, arginine 182, glutamine 191, glycine 211, and arginine 212 contribute to the substrate site; that span reads DLKFHDIPNT. The active-site Proton donor is lysine 64.

It belongs to the OMP decarboxylase family. Type 1 subfamily. In terms of assembly, homodimer.

It catalyses the reaction orotidine 5'-phosphate + H(+) = UMP + CO2. Its pathway is pyrimidine metabolism; UMP biosynthesis via de novo pathway; UMP from orotate: step 2/2. In terms of biological role, catalyzes the decarboxylation of orotidine 5'-monophosphate (OMP) to uridine 5'-monophosphate (UMP). This is Orotidine 5'-phosphate decarboxylase from Pseudomonas fluorescens (strain SBW25).